The sequence spans 435 residues: 3-ketoacyl-CoA thiolase (435 aa).

The Acyl-thioester intermediate role is filled by Cys-98. Active-site proton acceptor residues include His-391 and Cys-421.

It belongs to the thiolase-like superfamily. Thiolase family. As to quaternary structure, heterotetramer of two alpha chains (FadJ) and two beta chains (FadI).

Its subcellular location is the cytoplasm. The catalysed reaction is an acyl-CoA + acetyl-CoA = a 3-oxoacyl-CoA + CoA. Its pathway is lipid metabolism; fatty acid beta-oxidation. Its function is as follows. Catalyzes the final step of fatty acid oxidation in which acetyl-CoA is released and the CoA ester of a fatty acid two carbons shorter is formed. This Vibrio vulnificus (strain CMCP6) protein is 3-ketoacyl-CoA thiolase.